A 236-amino-acid polypeptide reads, in one-letter code: Small ribosomal subunit protein uS2c (236 aa).

This sequence belongs to the universal ribosomal protein uS2 family.

Its subcellular location is the plastid. It is found in the chloroplast. This Eucalyptus globulus subsp. globulus (Tasmanian blue gum) protein is Small ribosomal subunit protein uS2c (rps2).